Reading from the N-terminus, the 696-residue chain is DNA-directed RNA polymerase subunit beta' (696 aa).

Residues C70, C72, C85, and C88 each contribute to the Zn(2+) site. Positions 540, 542, and 544 each coordinate Mg(2+).

It belongs to the RNA polymerase beta' chain family. RpoC1 subfamily. In terms of assembly, in plastids the minimal PEP RNA polymerase catalytic core is composed of four subunits: alpha, beta, beta', and beta''. When a (nuclear-encoded) sigma factor is associated with the core the holoenzyme is formed, which can initiate transcription. Mg(2+) is required as a cofactor. The cofactor is Zn(2+).

The protein resides in the plastid. It is found in the chloroplast. The enzyme catalyses RNA(n) + a ribonucleoside 5'-triphosphate = RNA(n+1) + diphosphate. In terms of biological role, DNA-dependent RNA polymerase catalyzes the transcription of DNA into RNA using the four ribonucleoside triphosphates as substrates. This is DNA-directed RNA polymerase subunit beta' from Phaeodactylum tricornutum (strain CCAP 1055/1).